The chain runs to 457 residues: Siroheme synthase (457 aa).

Residues 1 to 204 (MDHLPIFCQL…ADEKAVNATT (204 aa)) are precorrin-2 dehydrogenase /sirohydrochlorin ferrochelatase. NAD(+)-binding positions include 22–23 (DV) and 43–44 (LT). Position 128 is a phosphoserine (S128). Residues 216-457 (GEVVLVGAGP…RDKLNWFSNH (242 aa)) form a uroporphyrinogen-III C-methyltransferase region. Position 225 (P225) interacts with S-adenosyl-L-methionine. D248 (proton acceptor) is an active-site residue. The active-site Proton donor is the K270. Residues 301–303 (GGD), I306, 331–332 (TA), M382, and G411 contribute to the S-adenosyl-L-methionine site.

In the N-terminal section; belongs to the precorrin-2 dehydrogenase / sirohydrochlorin ferrochelatase family. The protein in the C-terminal section; belongs to the precorrin methyltransferase family.

The enzyme catalyses uroporphyrinogen III + 2 S-adenosyl-L-methionine = precorrin-2 + 2 S-adenosyl-L-homocysteine + H(+). It catalyses the reaction precorrin-2 + NAD(+) = sirohydrochlorin + NADH + 2 H(+). It carries out the reaction siroheme + 2 H(+) = sirohydrochlorin + Fe(2+). It functions in the pathway cofactor biosynthesis; adenosylcobalamin biosynthesis; precorrin-2 from uroporphyrinogen III: step 1/1. The protein operates within cofactor biosynthesis; adenosylcobalamin biosynthesis; sirohydrochlorin from precorrin-2: step 1/1. It participates in porphyrin-containing compound metabolism; siroheme biosynthesis; precorrin-2 from uroporphyrinogen III: step 1/1. Its pathway is porphyrin-containing compound metabolism; siroheme biosynthesis; siroheme from sirohydrochlorin: step 1/1. It functions in the pathway porphyrin-containing compound metabolism; siroheme biosynthesis; sirohydrochlorin from precorrin-2: step 1/1. Its function is as follows. Multifunctional enzyme that catalyzes the SAM-dependent methylations of uroporphyrinogen III at position C-2 and C-7 to form precorrin-2 via precorrin-1. Then it catalyzes the NAD-dependent ring dehydrogenation of precorrin-2 to yield sirohydrochlorin. Finally, it catalyzes the ferrochelation of sirohydrochlorin to yield siroheme. The sequence is that of Siroheme synthase from Salmonella typhi.